A 78-amino-acid polypeptide reads, in one-letter code: Putative snRNP Sm-like protein (78 aa).

In terms of domain architecture, Sm spans 4-76; the sequence is RPLDVIHRSL…VLAISPVDVG (73 aa).

Belongs to the snRNP Sm proteins family.

The chain is Putative snRNP Sm-like protein from Thermococcus onnurineus (strain NA1).